A 480-amino-acid polypeptide reads, in one-letter code: MAAVEAETGLLTLESLPTDPLLLILSFVDYRDLINCCYVSRRLSQLSTHDPLWRRHCKKYWLISEEEKAGKSQCWRSLFIETYSDVGRYIDHYAAIKKAWRDLKKYLEPRCPRMVLSLKEGAREEDLDAVEAQIGCKLPDDYRCSYRIHNGQKLVVPGLLGSMALSNHYRSEDLLDVDTAAGGFQQRQGLKYCLPLTFCIHTGLSQYIAVEAAEGRNKNEVFYQCPDQMARNPAAIDMFIIGATFTDWFTSYVNNVVSGGFPIIRDQIFRYIHDPECVATTGDITVSVSTSFLPELSSVHPPHYFFTYRIRIEMSRDALPEKACQLDSRYWRITNAKGDVEEVQGPGVVGEFPIISPGRIYEYTSCTTFSTTSGYMEGYYTFHFLYFKDKVFNVAIPRFHMACPTFRVSIARLEMGPDEYEEMEEEAEEEEEEENDDSADMDESDESDADENESDEGEGEARRRRVFDVPIRRRRCSRLF.

An F-box domain is found at 10–56 (LLTLESLPTDPLLLILSFVDYRDLINCCYVSRRLSQLSTHDPLWRRH). One can recognise an ApaG domain in the interval 278-408 (VATTGDITVS…FHMACPTFRV (131 aa)). The segment covering 419–458 (EYEEMEEEAEEEEEEENDDSADMDESDESDADENESDEGE) has biased composition (acidic residues). The tract at residues 419-463 (EYEEMEEEAEEEEEEENDDSADMDESDESDADENESDEGEGEARR) is disordered.

In terms of assembly, part of a SCF (SKP1-cullin-F-box) protein ligase complex SCF(FBXO3) consisting of FBXO3, SKP1, CUL1 and RBX1. Interacts with PML, interaction is direct and takes place either alone or within the SCF complex.

It localises to the nucleus. It functions in the pathway protein modification; protein ubiquitination. Its function is as follows. Substrate recognition component of the SCF (SKP1-CUL1-F-box protein)-type E3 ubiquitin ligase complex, SCF(FBXO3), which mediates the ubiquitination and subsequent proteasomal degradation of target proteins. Mediates the ubiquitination of HIPK2 and probably that of EP300, leading to rapid degradation by the proteasome. In the presence of PML, HIPK2 ubiquitination still occurs, but degradation is prevented. PML, HIPK2 and FBXO3 may act synergically to activate p53/TP53-dependent transactivation. The SCF(FBXO3) also acts as a regulator of inflammation by mediating ubiquitination and degradation of FBXL2: specifically recognizes FBXL2 phosphorylated at 'Thr-404' and promotes its ubiquitination. In Mus musculus (Mouse), this protein is F-box only protein 3 (Fbxo3).